Consider the following 251-residue polypeptide: uncharacterized protein (251 aa).

Positions 3–118 constitute a Response regulatory domain; that stretch reads KVVICDDERI…QLEHILDILV (116 aa). Asp-55 bears the 4-aspartylphosphate mark. Residues 152-249 form the HTH araC/xylS-type domain; it reads NQILSQIKQH…HMSPSDYNKL (98 aa). DNA-binding regions (H-T-H motif) lie at residues 169 to 190 and 216 to 239; these read LDLI…KEHV and HYEI…KKYL.

Post-translationally, phosphorylated by SE_0166.

The protein localises to the cytoplasm. In terms of biological role, probable member of the two-component regulatory system SE_0166/SE_0165. This is an uncharacterized protein from Staphylococcus epidermidis (strain ATCC 12228 / FDA PCI 1200).